A 473-amino-acid polypeptide reads, in one-letter code: Photosystem II CP43 reaction center protein (473 aa).

Positions Met-1–Glu-14 are excised as a propeptide. At Thr-15 the chain carries N-acetylthreonine. At Thr-15 the chain carries Phosphothreonine. Helical transmembrane passes span Leu-69 to Ala-93, Leu-134 to Asn-155, Lys-178 to Thr-200, Lys-255 to Ser-275, and Trp-291 to Ala-312. [CaMn4O5] cluster is bound at residue Glu-367. Residues Arg-447–Pro-471 traverse the membrane as a helical segment.

Belongs to the PsbB/PsbC family. PsbC subfamily. In terms of assembly, PSII is composed of 1 copy each of membrane proteins PsbA, PsbB, PsbC, PsbD, PsbE, PsbF, PsbH, PsbI, PsbJ, PsbK, PsbL, PsbM, PsbT, PsbX, PsbY, PsbZ, Psb30/Ycf12, at least 3 peripheral proteins of the oxygen-evolving complex and a large number of cofactors. It forms dimeric complexes. Binds multiple chlorophylls and provides some of the ligands for the Ca-4Mn-5O cluster of the oxygen-evolving complex. It may also provide a ligand for a Cl- that is required for oxygen evolution. PSII binds additional chlorophylls, carotenoids and specific lipids. is required as a cofactor.

It is found in the plastid membrane. Its function is as follows. One of the components of the core complex of photosystem II (PSII). It binds chlorophyll and helps catalyze the primary light-induced photochemical processes of PSII. PSII is a light-driven water:plastoquinone oxidoreductase, using light energy to abstract electrons from H(2)O, generating O(2) and a proton gradient subsequently used for ATP formation. The polypeptide is Photosystem II CP43 reaction center protein (Cuscuta obtusiflora (Peruvian dodder)).